Consider the following 235-residue polypeptide: 2,3-bisphosphoglycerate-dependent phosphoglycerate mutase 1 (235 aa).

Substrate contacts are provided by residues 8 to 15 (RHGESVAN), 21 to 22 (TG), Arg60, 87 to 90 (ERHY), Lys98, and 114 to 115 (RR). His9 (tele-phosphohistidine intermediate) is an active-site residue. Catalysis depends on Glu87, which acts as the Proton donor/acceptor.

The protein belongs to the phosphoglycerate mutase family. BPG-dependent PGAM subfamily.

The enzyme catalyses (2R)-2-phosphoglycerate = (2R)-3-phosphoglycerate. The protein operates within carbohydrate degradation; glycolysis; pyruvate from D-glyceraldehyde 3-phosphate: step 3/5. In terms of biological role, catalyzes the interconversion of 2-phosphoglycerate and 3-phosphoglycerate. This Latilactobacillus sakei subsp. sakei (strain 23K) (Lactobacillus sakei subsp. sakei) protein is 2,3-bisphosphoglycerate-dependent phosphoglycerate mutase 1.